Consider the following 380-residue polypeptide: Beta sliding clamp (380 aa).

Belongs to the beta sliding clamp family. In terms of assembly, forms a ring-shaped head-to-tail homodimer around DNA which binds and tethers DNA polymerases and other proteins to the DNA. The DNA replisome complex has a single clamp-loading complex (3 tau and 1 each of delta, delta', psi and chi subunits) which binds 3 Pol III cores (1 core on the leading strand and 2 on the lagging strand) each with a beta sliding clamp dimer. Additional proteins in the replisome are other copies of gamma, psi and chi, Ssb, DNA helicase and RNA primase.

It localises to the cytoplasm. Its function is as follows. Confers DNA tethering and processivity to DNA polymerases and other proteins. Acts as a clamp, forming a ring around DNA (a reaction catalyzed by the clamp-loading complex) which diffuses in an ATP-independent manner freely and bidirectionally along dsDNA. Initially characterized for its ability to contact the catalytic subunit of DNA polymerase III (Pol III), a complex, multichain enzyme responsible for most of the replicative synthesis in bacteria; Pol III exhibits 3'-5' exonuclease proofreading activity. The beta chain is required for initiation of replication as well as for processivity of DNA replication. This is Beta sliding clamp (dnaN) from Mycoplasma pneumoniae (strain ATCC 29342 / M129 / Subtype 1) (Mycoplasmoides pneumoniae).